The following is a 215-amino-acid chain: Cytochrome b6 (215 aa).

A helical transmembrane segment spans residues I32–F52. Heme c is bound at residue C35. Residues H86 and H100 each coordinate heme b. Transmembrane regions (helical) follow at residues A90–F110, L116–Y136, and L186–I206. Residues H187 and H202 each coordinate heme b.

Belongs to the cytochrome b family. PetB subfamily. In terms of assembly, the 4 large subunits of the cytochrome b6-f complex are cytochrome b6, subunit IV (17 kDa polypeptide, PetD), cytochrome f and the Rieske protein, while the 4 small subunits are PetG, PetL, PetM and PetN. The complex functions as a dimer. Requires heme b as cofactor. Heme c is required as a cofactor.

It is found in the plastid. The protein localises to the chloroplast thylakoid membrane. Its function is as follows. Component of the cytochrome b6-f complex, which mediates electron transfer between photosystem II (PSII) and photosystem I (PSI), cyclic electron flow around PSI, and state transitions. The polypeptide is Cytochrome b6 (Gracilaria tenuistipitata var. liui (Red alga)).